Here is a 323-residue protein sequence, read N- to C-terminus: Prenyl transferase (323 aa).

Residues K46, R49, and H81 each contribute to the isopentenyl diphosphate site. Residues D88 and D92 each contribute to the Mg(2+) site. R97 is a binding site for an all-trans-polyprenyl diphosphate. R98 provides a ligand contact to isopentenyl diphosphate. 3 residues coordinate an all-trans-polyprenyl diphosphate: K174, T175, and Q212.

Belongs to the FPP/GGPP synthase family. It depends on Mg(2+) as a cofactor.

In terms of biological role, possible role in synthesis of the nonaprenyl side chain of plastoquinone or in synthesis of other prenyl chains such as undekaprenyl pyrophosphate. This is Prenyl transferase (preA) from Synechocystis sp. (strain ATCC 27184 / PCC 6803 / Kazusa).